The sequence spans 518 residues: Glutamate--cysteine ligase (518 aa).

The protein belongs to the glutamate--cysteine ligase type 1 family. Type 1 subfamily.

It catalyses the reaction L-cysteine + L-glutamate + ATP = gamma-L-glutamyl-L-cysteine + ADP + phosphate + H(+). It functions in the pathway sulfur metabolism; glutathione biosynthesis; glutathione from L-cysteine and L-glutamate: step 1/2. This chain is Glutamate--cysteine ligase, found in Escherichia coli O139:H28 (strain E24377A / ETEC).